Consider the following 485-residue polypeptide: Probable WRKY transcription factor 10 (485 aa).

Disordered stretches follow at residues 43–62 and 215–293; these read IFPQESLPRDHTDQSGQRSG and ISIE…SKTQ. Positions 216–264 are enriched in acidic residues; the sequence is SIEDSESEDGNKDDDDEDFQYEDEDEDQYDQDQDVDEDEEEEKDEDNVA. Residues 301–366 constitute a DNA-binding region (WRKY); the sequence is SDEDNPNDGY…YDGIHNHPSP (66 aa). The Zn(2+) site is built by Cys332, Cys337, His361, and His363. Residues 358-417 form a disordered region; that stretch reads DGIHNHPSPPARRSNSSSRNRSAGATIPQNQNDRTSRLGRAPPTPTPPTPPPSSYTPEEM. The span at 368-380 shows a compositional bias: low complexity; sequence ARRSNSSSRNRSA. Positions 399–411 are enriched in pro residues; it reads PPTPTPPTPPPSS.

The protein belongs to the WRKY group I family. Interacts with IKU1. In terms of tissue distribution, expressed in male gametophytes (pollen) and in the endosperm of fertilized ovules.

The protein localises to the nucleus. Transcription factor. Interacts specifically with the W box (5'-(T)TGAC[CT]-3'), a frequently occurring elicitor-responsive cis-acting element. Modulates seed size by negatively regulating the cellularization of syncytial endosperm. This Arabidopsis thaliana (Mouse-ear cress) protein is Probable WRKY transcription factor 10 (WRKY10).